The primary structure comprises 164 residues: Ribosome maturation factor RimM (164 aa).

The 73-residue stretch at 92-164 (PDSEYYVANL…FVVIVPPEFI (73 aa)) folds into the PRC barrel domain.

Belongs to the RimM family. Binds ribosomal protein uS19.

Its subcellular location is the cytoplasm. Its function is as follows. An accessory protein needed during the final step in the assembly of 30S ribosomal subunit, possibly for assembly of the head region. Essential for efficient processing of 16S rRNA. May be needed both before and after RbfA during the maturation of 16S rRNA. It has affinity for free ribosomal 30S subunits but not for 70S ribosomes. The sequence is that of Ribosome maturation factor RimM from Orientia tsutsugamushi (strain Ikeda) (Rickettsia tsutsugamushi).